The following is a 322-amino-acid chain: tRNA U34 carboxymethyltransferase (322 aa).

Residues Lys-91, Trp-105, Lys-110, Gly-129, 179 to 180 (LE), Met-195, Tyr-199, and Arg-314 contribute to the carboxy-S-adenosyl-L-methionine site.

The protein belongs to the class I-like SAM-binding methyltransferase superfamily. CmoB family. In terms of assembly, homotetramer.

It carries out the reaction carboxy-S-adenosyl-L-methionine + 5-hydroxyuridine(34) in tRNA = 5-carboxymethoxyuridine(34) in tRNA + S-adenosyl-L-homocysteine + H(+). Functionally, catalyzes carboxymethyl transfer from carboxy-S-adenosyl-L-methionine (Cx-SAM) to 5-hydroxyuridine (ho5U) to form 5-carboxymethoxyuridine (cmo5U) at position 34 in tRNAs. This is tRNA U34 carboxymethyltransferase from Pseudomonas aeruginosa (strain ATCC 15692 / DSM 22644 / CIP 104116 / JCM 14847 / LMG 12228 / 1C / PRS 101 / PAO1).